A 215-amino-acid chain; its full sequence is MSCLAALTKFHEIYKAAFVERLGELPRCFTHGRPSPCLADDALAGSEEPQPWQMVPRREVAVFNNVSHAMDIELHHDIDDFYGHLFGGPLQFDSPWGEGELIQIWNEDDFVLLQQNILGHLMMKKQLKQPQTWFVGLIGDVDEMVSVNNADGTVWREVAGQEPHEQLAESLEAFLQQLKPRVAPPQYHQEPAATVNPHPGIFASLKRMWQNLTGR.

The protein belongs to the Syd family.

The protein resides in the cell inner membrane. Functionally, interacts with the SecY protein in vivo. May bind preferentially to an uncomplexed state of SecY, thus functioning either as a chelating agent for excess SecY in the cell or as a regulatory factor that negatively controls the translocase function. The chain is Protein Syd from Shewanella amazonensis (strain ATCC BAA-1098 / SB2B).